The following is an 862-amino-acid chain: Protein SEY1 (862 aa).

Over 1 to 743 (MASNGHFSSV…KRSAIGGITQ (743 aa)) the chain is Cytoplasmic. One can recognise a GB1/RHD3-type G domain in the interval 48–301 (GFNYHLISVF…IPADGFAVYA (254 aa)). 58 to 65 (GSQSTGKS) lines the GTP pocket. Residues 476–500 (SDYKQELSLFQKDLEKISSQLRKDE) adopt a coiled-coil conformation. A helical membrane pass occupies residues 744-764 (VPLYFYGLLLALGWNEIIAVL). Residues 765-767 (RNP) are Lumenal-facing. The chain crosses the membrane as a helical span at residues 768–788 (IYFIFLLLIGVGAYVTFRLNL). At 789–862 (WGPMINMAEA…TSDDDNDDDL (74 aa)) the chain is on the cytoplasmic side. Residues 818–862 (SDSGRQAMAMSGRNARGTEEYEMSSNLKSKGRRTDTSDDDNDDDL) form a disordered region.

It belongs to the TRAFAC class dynamin-like GTPase superfamily. GB1/RHD3 GTPase family. RHD3 subfamily.

Its subcellular location is the endoplasmic reticulum membrane. Its function is as follows. Cooperates with the reticulon proteins and tubule-shaping DP1 family proteins to generate and maintain the structure of the tubular endoplasmic reticulum network. Has GTPase activity, which is required for its function in ER organization. The polypeptide is Protein SEY1 (Arthroderma otae (strain ATCC MYA-4605 / CBS 113480) (Microsporum canis)).